A 469-amino-acid chain; its full sequence is 3-isopropylmalate dehydratase large subunit (469 aa).

The [4Fe-4S] cluster site is built by C350, C410, and C413.

It belongs to the aconitase/IPM isomerase family. LeuC type 1 subfamily. In terms of assembly, heterodimer of LeuC and LeuD. [4Fe-4S] cluster is required as a cofactor.

The enzyme catalyses (2R,3S)-3-isopropylmalate = (2S)-2-isopropylmalate. It participates in amino-acid biosynthesis; L-leucine biosynthesis; L-leucine from 3-methyl-2-oxobutanoate: step 2/4. Catalyzes the isomerization between 2-isopropylmalate and 3-isopropylmalate, via the formation of 2-isopropylmaleate. This Rhodopseudomonas palustris (strain TIE-1) protein is 3-isopropylmalate dehydratase large subunit.